Reading from the N-terminus, the 338-residue chain is MSQEFNVVVLGASGAVGQTMIEILEERNFPVAKLFPLASSRSAGGTVSFNGKQVEILDVDDFDWSQAQIGFFSAGGDVSEKWAPIAAENGCVVIDNTSQFRYDNDVPLVIPEVNPEAIADFRNRNIIANPNCSTIQMLVALKPIYDAFGISRINVATYQSVSGSGKEAITELAGQCSKLLQGLPAESKVYPKQIAFNVLPQIDKFMENGYTKEEMKMVWETQKIFGDDNIVVNPTAVRVPVFYGHSEAIHLETIQPAEAEDVKAVLREAPGIELFESNEEYPTAVTESAGTDPVYVGRVRKDISHSHGINLWVVSDNIRKGAALNSVQIAEVLIRDYY.

Residues 13 to 16 (SGAV) and 41 to 42 (RS) contribute to the NADP(+) site. Arginine 101 contributes to the phosphate binding site. The active-site Acyl-thioester intermediate is the cysteine 132. Glutamine 159 is a substrate binding site. 162 to 163 (SG) is an NADP(+) binding site. Lysine 216 is a phosphate binding site. Arginine 238 provides a ligand contact to substrate. Histidine 245 serves as the catalytic Proton acceptor. Residue asparagine 317 coordinates NADP(+).

This sequence belongs to the aspartate-semialdehyde dehydrogenase family. As to quaternary structure, homodimer.

The enzyme catalyses L-aspartate 4-semialdehyde + phosphate + NADP(+) = 4-phospho-L-aspartate + NADPH + H(+). Its pathway is amino-acid biosynthesis; L-lysine biosynthesis via DAP pathway; (S)-tetrahydrodipicolinate from L-aspartate: step 2/4. The protein operates within amino-acid biosynthesis; L-methionine biosynthesis via de novo pathway; L-homoserine from L-aspartate: step 2/3. It participates in amino-acid biosynthesis; L-threonine biosynthesis; L-threonine from L-aspartate: step 2/5. Functionally, catalyzes the NADPH-dependent formation of L-aspartate-semialdehyde (L-ASA) by the reductive dephosphorylation of L-aspartyl-4-phosphate. This chain is Aspartate-semialdehyde dehydrogenase, found in Shewanella violacea (strain JCM 10179 / CIP 106290 / LMG 19151 / DSS12).